The following is a 480-amino-acid chain: MVKICCIGAGYVGGPTMAVIALKCPDIEVAVVDISVPRINAWNSDQLPIYEPGLDDIVKQCRGKNLFFSTDVEKHVREADIVFVSVNTPTKTTGLGAGKAADLTYWESAARMIADVSVSDKIVVEKSTVPVKTAEAIEKILMHNSKGIKFQILSNPEFLAEGTAIADLFNPDRVLIGGRETPEGFKAVQTLKEVYANWVPEGQIITTNLWSAELSKLAANAFLAQRISSVNAMSALCESTGADVTQVSYAVGTDSRIGSKFLNASVGFGGSCFQKDILNLVYICQCNGLPEVAEYWKQVIKINDYQKNRFVNRIVSSMFNTVSNKKVAILGFAFKKDTGDTRETPAIDVCKGLLGDKAQISIYDPQVTEEQIQRDLSMKKFDWDHPLHLQPMSPTTVKQVSVTWDAYEATKDAHAVCVLTEWDEFKSLDYQKIFDNMQKPAFIFDGRNIMNVNKLREIGFIVYSIGKPLDPWLKDMPAFV.

NAD(+)-binding positions include 3–20 (KICC…MAVI), D33, R38, T90, T128, and E161. Residues 157 to 161 (EFLAE), K216, 216 to 223 (KLAANAFL), 256 to 269 (RIGS…VGFG), and G269 contribute to the substrate site. Residue C272 is the Nucleophile of the active site. Residue K275 participates in NAD(+) binding. Residues F334 and K335 each coordinate substrate. R342 contacts NAD(+). Position 447 (R447) interacts with substrate.

It belongs to the UDP-glucose/GDP-mannose dehydrogenase family.

It carries out the reaction UDP-alpha-D-glucose + 2 NAD(+) + H2O = UDP-alpha-D-glucuronate + 2 NADH + 3 H(+). The protein operates within nucleotide-sugar biosynthesis; UDP-alpha-D-glucuronate biosynthesis; UDP-alpha-D-glucuronate from UDP-alpha-D-glucose: step 1/1. Inhibited by UDP-xylose. Involved in the biosynthesis of UDP-glucuronic acid (UDP-GlcA), providing nucleotide sugars for cell-wall polymers. This Arabidopsis thaliana (Mouse-ear cress) protein is UDP-glucose 6-dehydrogenase 4.